The primary structure comprises 453 residues: Bifunctional protein GlmU (453 aa).

A pyrophosphorylase region spans residues 1–226; it reads MKFSAVILAA…AIEVEGVNDR (226 aa). UDP-N-acetyl-alpha-D-glucosamine-binding positions include 8 to 11, lysine 22, glutamine 73, 78 to 79, 100 to 102, glycine 137, glutamate 151, asparagine 166, and asparagine 224; these read LAAG, GT, and YGD. Aspartate 102 serves as a coordination point for Mg(2+). Asparagine 224 contributes to the Mg(2+) binding site. The segment at 227–247 is linker; the sequence is AQLARLERAFQSMQAQKLLEQ. The N-acetyltransferase stretch occupies residues 248–453; the sequence is GVMLRDPARF…TGWQRPVKQK (206 aa). Residues arginine 330 and lysine 348 each coordinate UDP-N-acetyl-alpha-D-glucosamine. Histidine 360 (proton acceptor) is an active-site residue. Positions 363 and 374 each coordinate UDP-N-acetyl-alpha-D-glucosamine. Residues alanine 377, 383–384, serine 402, alanine 420, and arginine 437 contribute to the acetyl-CoA site; that span reads NY.

It in the N-terminal section; belongs to the N-acetylglucosamine-1-phosphate uridyltransferase family. The protein in the C-terminal section; belongs to the transferase hexapeptide repeat family. As to quaternary structure, homotrimer. The cofactor is Mg(2+).

It localises to the cytoplasm. It catalyses the reaction alpha-D-glucosamine 1-phosphate + acetyl-CoA = N-acetyl-alpha-D-glucosamine 1-phosphate + CoA + H(+). The enzyme catalyses N-acetyl-alpha-D-glucosamine 1-phosphate + UTP + H(+) = UDP-N-acetyl-alpha-D-glucosamine + diphosphate. It functions in the pathway nucleotide-sugar biosynthesis; UDP-N-acetyl-alpha-D-glucosamine biosynthesis; N-acetyl-alpha-D-glucosamine 1-phosphate from alpha-D-glucosamine 6-phosphate (route II): step 2/2. It participates in nucleotide-sugar biosynthesis; UDP-N-acetyl-alpha-D-glucosamine biosynthesis; UDP-N-acetyl-alpha-D-glucosamine from N-acetyl-alpha-D-glucosamine 1-phosphate: step 1/1. The protein operates within bacterial outer membrane biogenesis; LPS lipid A biosynthesis. Its function is as follows. Catalyzes the last two sequential reactions in the de novo biosynthetic pathway for UDP-N-acetylglucosamine (UDP-GlcNAc). The C-terminal domain catalyzes the transfer of acetyl group from acetyl coenzyme A to glucosamine-1-phosphate (GlcN-1-P) to produce N-acetylglucosamine-1-phosphate (GlcNAc-1-P), which is converted into UDP-GlcNAc by the transfer of uridine 5-monophosphate (from uridine 5-triphosphate), a reaction catalyzed by the N-terminal domain. The sequence is that of Bifunctional protein GlmU from Vibrio parahaemolyticus serotype O3:K6 (strain RIMD 2210633).